We begin with the raw amino-acid sequence, 333 residues long: D-fructose 1,6-bisphosphatase class 2/sedoheptulose 1,7-bisphosphatase (333 aa).

Mn(2+) is bound by residues D33, E57, D85, and E88. Substrate contacts are provided by residues 88-90 (EGT), Y119, 164-166 (RAR), and 186-188 (DGD). Residue E213 participates in Mn(2+) binding.

This sequence belongs to the FBPase class 2 family. As to quaternary structure, homotetramer. Mn(2+) is required as a cofactor.

It catalyses the reaction beta-D-fructose 1,6-bisphosphate + H2O = beta-D-fructose 6-phosphate + phosphate. The enzyme catalyses D-sedoheptulose 1,7-bisphosphate + H2O = D-sedoheptulose 7-phosphate + phosphate. It participates in carbohydrate biosynthesis; Calvin cycle. Its function is as follows. Catalyzes the hydrolysis of fructose 1,6-bisphosphate (Fru 1,6-P2) and sedoheptulose 1,7-bisphosphate (Sed 1,7-P2) to fructose 6-phosphate and sedoheptulose 7-phosphate, respectively. The protein is D-fructose 1,6-bisphosphatase class 2/sedoheptulose 1,7-bisphosphatase of Prochlorococcus marinus (strain MIT 9515).